A 297-amino-acid chain; its full sequence is 4-hydroxy-tetrahydrodipicolinate synthase (297 aa).

Position 46 (Thr-46) interacts with pyruvate. The active-site Proton donor/acceptor is the Tyr-134. Lys-162 (schiff-base intermediate with substrate) is an active-site residue. Ile-209 is a binding site for pyruvate.

Belongs to the DapA family. Homotetramer; dimer of dimers.

It is found in the cytoplasm. It catalyses the reaction L-aspartate 4-semialdehyde + pyruvate = (2S,4S)-4-hydroxy-2,3,4,5-tetrahydrodipicolinate + H2O + H(+). The protein operates within amino-acid biosynthesis; L-lysine biosynthesis via DAP pathway; (S)-tetrahydrodipicolinate from L-aspartate: step 3/4. In terms of biological role, catalyzes the condensation of (S)-aspartate-beta-semialdehyde [(S)-ASA] and pyruvate to 4-hydroxy-tetrahydrodipicolinate (HTPA). The sequence is that of 4-hydroxy-tetrahydrodipicolinate synthase from Methanosphaera stadtmanae (strain ATCC 43021 / DSM 3091 / JCM 11832 / MCB-3).